The sequence spans 308 residues: 4-hydroxy-tetrahydrodipicolinate synthase (308 aa).

T53 serves as a coordination point for pyruvate. Y141 acts as the Proton donor/acceptor in catalysis. K169 functions as the Schiff-base intermediate with substrate in the catalytic mechanism. A pyruvate-binding site is contributed by V209.

It belongs to the DapA family. Homotetramer; dimer of dimers.

It is found in the cytoplasm. It carries out the reaction L-aspartate 4-semialdehyde + pyruvate = (2S,4S)-4-hydroxy-2,3,4,5-tetrahydrodipicolinate + H2O + H(+). Its pathway is amino-acid biosynthesis; L-lysine biosynthesis via DAP pathway; (S)-tetrahydrodipicolinate from L-aspartate: step 3/4. Catalyzes the condensation of (S)-aspartate-beta-semialdehyde [(S)-ASA] and pyruvate to 4-hydroxy-tetrahydrodipicolinate (HTPA). This is 4-hydroxy-tetrahydrodipicolinate synthase from Acidothermus cellulolyticus (strain ATCC 43068 / DSM 8971 / 11B).